Consider the following 258-residue polypeptide: MLAKRIIPCLDVRDGQVVKGVQFRNHEIIGDIVPLAQHYAQEGADELVFYDITASSDGRTVDKSWVERIAQVIDIPFCVAGGIKTIEDAEKLFAFGADKISINSPALADPTLISRLADRFGVQAIVVGIDSWFEQETGKYWVNQYTGDETRTRQTHWQLLDWVKEVQQCGAGEIVLNMMNQDGLRNGYDLAQLKLVRGVCRVPLIASGGAGKMVHFRDAFIEAKVDGALAASVFHKQIIEIGELKSYLVKSAIEIRSE.

Catalysis depends on residues aspartate 11 and aspartate 130.

The protein belongs to the HisA/HisF family. Heterodimer of HisH and HisF.

Its subcellular location is the cytoplasm. The catalysed reaction is 5-[(5-phospho-1-deoxy-D-ribulos-1-ylimino)methylamino]-1-(5-phospho-beta-D-ribosyl)imidazole-4-carboxamide + L-glutamine = D-erythro-1-(imidazol-4-yl)glycerol 3-phosphate + 5-amino-1-(5-phospho-beta-D-ribosyl)imidazole-4-carboxamide + L-glutamate + H(+). It participates in amino-acid biosynthesis; L-histidine biosynthesis; L-histidine from 5-phospho-alpha-D-ribose 1-diphosphate: step 5/9. IGPS catalyzes the conversion of PRFAR and glutamine to IGP, AICAR and glutamate. The HisF subunit catalyzes the cyclization activity that produces IGP and AICAR from PRFAR using the ammonia provided by the HisH subunit. This Haemophilus influenzae (strain PittEE) protein is Imidazole glycerol phosphate synthase subunit HisF.